Consider the following 580-residue polypeptide: External alternative NAD(P)H-ubiquinone oxidoreductase B3, mitochondrial (580 aa).

The N-terminal 38 residues, 1–38 (MRPFAYFERLSQAFHDYPSLSKILVVSTISGGGLIVYS), are a transit peptide targeting the mitochondrion. 57-87 (KVVLLGTGWAGASFLKTLNNSSYEVQVISPR) is a binding site for FAD. 221-257 (LHFVVVGGGPTGVEFASELHDFVNEDLVKLYPKAKNL) contacts NAD(+). The EF-hand domain occupies 377-412 (KVMEDIAAIFKKADKENSGTLTMKEFHEVMSDICDR). Residues Asp-390, Ser-394, Thr-396, and Glu-401 each contribute to the Ca(2+) site. The short motif at 571–580 (FIFGRDSSRI) is the Microbody targeting signal element.

It belongs to the NADH dehydrogenase family. The cofactor is FAD. In terms of tissue distribution, expressed at low levels in seedlings, roots, stems, buds and flowers and, to a lower extent, in leaves and cotyledons.

It localises to the mitochondrion inner membrane. The protein localises to the peroxisome. The catalysed reaction is a quinone + NADH + H(+) = a quinol + NAD(+). The enzyme catalyses a ubiquinone + NADH + H(+) = a ubiquinol + NAD(+). Alternative NADH-ubiquinone oxidoreductase which catalyzes the oxidation of mitochondrial NADH does not translocate protons across the inner mitochondrial membrane. The chain is External alternative NAD(P)H-ubiquinone oxidoreductase B3, mitochondrial (NDB3) from Arabidopsis thaliana (Mouse-ear cress).